We begin with the raw amino-acid sequence, 669 residues long: Myb-like protein M (669 aa).

Residues 27 to 69 (DPSLMDDEFSDNEYDLSPKDDVPSPSKRGRGQIQNGIRRSPNK) are disordered. Positions 30-40 (LMDDEFSDNEY) are enriched in acidic residues. HTH myb-type domains follow at residues 60 to 118 (QNGI…SPDI) and 119 to 170 (RKGP…SREV). 2 consecutive DNA-binding regions (H-T-H motif) follow at residues 90–114 (WKRI…KRVL) and 142–166 (WKKI…KSLQ). One can recognise a Myb-like domain in the interval 172 to 223 (WVPKEDEVLVKKVDEMGENLSWLEVSEYLAKLKHTNTLRTALECKTRYLQLT). Disordered regions lie at residues 226 to 530 (GGSI…EDNG) and 550 to 636 (IKNK…PHQS). Composition is skewed to low complexity over residues 234-382 (NQSN…SSPS), 389-415 (NNNN…NSNN), and 450-464 (PTSL…SSPS). Polar residues predominate over residues 465–482 (CNNSIRQPSPSPSIKTFK). 3 stretches are compositionally biased toward low complexity: residues 483–521 (STIV…NNDN), 555–593 (NNNN…NSDN), and 611–636 (SNFK…PHQS).

The protein localises to the nucleus. This chain is Myb-like protein M (mybM), found in Dictyostelium discoideum (Social amoeba).